The following is a 659-amino-acid chain: MFAKRFKTSLLPLFAGFLLLFHLVLAGPAAASAETANKSNELTAPSIKSGTILHAWNWSFNTLKHNMKDIHDAGYTAIQTSPINQVKEGNQGDKSMSNWYWLYQPTSYQIGNRYLGTEQEFKEMCAAAEEYGIKVIVDAVINHTTSDYAAISNEVKSIPNWTHGNTQIKNWSDRWDVTQNSLLGLYDWNTQNTQVQSYLKRFLDRALNDGADGFRFDAAKHIELPDDGSYGSQFWPNITNTSAEFQYGEILQDSASRDAAYANYMDVTASNYGHSIRSALKNRNLGVSNISHYASDVSADKLVTWVESHDTYANDDEESTWMSDDDIRLGWAVIASRSGSTPLFFSRPEGGGNGVRFPGKSQIGDRGSALFEDQAITAVNRFHNVMAGQPEELSNPNGNNQIFMNQRGSHGVVLANAGSSSVSINTATKLPDGRYDNKAGAGSFQVNDGKLTGTINARSVAVLYPDDIAKAPHVFLENYKTGVTHSFNDQLTITLRADANTTKAVYQINNGPETAFKDGDQFTIGKGDPFGKTYTIMLKGTNSDGVTRTEKYSFVKRDPASAKTIGYQNPNHWSQVNAYIYKHDGSRVIELTGSWPGKPMTKNADGIYTLTLPADTDTTNAKVIFNNGSAQVPGQNQPGFDYVLNGLYNDSGLSGSLPH.

A signal peptide spans 1 to 27 (MFAKRFKTSLLPLFAGFLLLFHLVLAG). The propeptide occupies 28-41 (PAAASAETANKSNE). Positions 142, 178, 187, 210, and 212 each coordinate Ca(2+). Catalysis depends on D217, which acts as the Nucleophile. H221 is a binding site for Ca(2+). The Proton donor role is filled by E249.

The protein belongs to the glycosyl hydrolase 13 family. Monomer. Ca(2+) serves as cofactor.

Its subcellular location is the secreted. It catalyses the reaction Endohydrolysis of (1-&gt;4)-alpha-D-glucosidic linkages in polysaccharides containing three or more (1-&gt;4)-alpha-linked D-glucose units.. The protein is Alpha-amylase (amyE) of Bacillus subtilis (strain 168).